A 131-amino-acid polypeptide reads, in one-letter code: Acanthoscurrin-2 (131 aa).

Lysine 130 is modified (lysine amide).

Expressed in hemocytes and secreted into the plasma following bacterial immune challenge.

The protein localises to the secreted. In terms of biological role, antimicrobial protein. Strong activity against the Gram-negative bacterium E.coli SBS363 and yeast C.albicans. No detectable activity against the Gram-positive bacterium M.luteus. The polypeptide is Acanthoscurrin-2 (Acanthoscurria gomesiana (Tarantula spider)).